The chain runs to 231 residues: Cytochrome b-c1 complex subunit Rieske, mitochondrial (231 aa).

The N-terminal 24 residues, Met1–Ala24, are a transit peptide targeting the mitochondrion. Positions Leu25–Gln32 are cleaved as a propeptide — removed in mature form. At Gly33–Ser65 the chain is on the mitochondrial matrix side. A helical membrane pass occupies residues Thr66–Lys95. Residues Asn96–Gly231 are Mitochondrial intermembrane-facing. One can recognise a Rieske domain in the interval Arg134–Val229. [2Fe-2S] cluster-binding residues include Cys174, His176, Cys193, and His196. Cys179 and Cys195 are joined by a disulfide.

This sequence belongs to the Rieske iron-sulfur protein family. As to quaternary structure, component of the ubiquinol-cytochrome c oxidoreductase (cytochrome b-c1 complex, complex III, CIII), a multisubunit enzyme composed of 10 subunits. The complex is composed of 3 respiratory subunits cytochrome b (cob), cytochrome c1 (cyt-1) and Rieske protein (fes-1), 2 core protein subunits pep and ucr-1, and 5 low-molecular weight protein subunits qcr6, qcr7, qcr8, qcr9 and probably NCU16844/qcr10. The complex exists as an obligatory dimer and forms supercomplexes (SCs) in the inner mitochondrial membrane with NADH-ubiquinone oxidoreductase (complex I, CI) and cytochrome c oxidase (complex IV, CIV), resulting in different assemblies (supercomplexes SCI(1)III(2), SCIII(2)IV(1) and SCIII(2)IV(2) as well as higher order I(x)III(y)IV(z) megacomplexes). Requires [2Fe-2S] cluster as cofactor. Post-translationally, processed by both the mitochondrial processing peptidase (MPP) and the mitochondrial intermediate protease (MIP). Initially, MPP removes 25 amino acids from the newly imported precursor in the mitochondrial matrix. This proteolytic processing is then followed by a second proteolytic cleavage by MIP, which removes an octapeptide to generate mature-sized Rieske protein.

It localises to the mitochondrion inner membrane. It carries out the reaction a quinol + 2 Fe(III)-[cytochrome c](out) = a quinone + 2 Fe(II)-[cytochrome c](out) + 2 H(+)(out). Functionally, component of the ubiquinol-cytochrome c oxidoreductase, a multisubunit transmembrane complex that is part of the mitochondrial electron transport chain which drives oxidative phosphorylation. The respiratory chain contains 3 multisubunit complexes succinate dehydrogenase (complex II, CII), ubiquinol-cytochrome c oxidoreductase (cytochrome b-c1 complex, complex III, CIII) and cytochrome c oxidase (complex IV, CIV), that cooperate to transfer electrons derived from NADH and succinate to molecular oxygen, creating an electrochemical gradient over the inner membrane that drives transmembrane transport and the ATP synthase. The cytochrome b-c1 complex catalyzes electron transfer from ubiquinol to cytochrome c, linking this redox reaction to translocation of protons across the mitochondrial inner membrane, with protons being carried across the membrane as hydrogens on the quinol. In the process called Q cycle, 2 protons are consumed from the matrix, 4 protons are released into the intermembrane space and 2 electrons are passed to cytochrome c. The Rieske protein is a catalytic core subunit containing a [2Fe-2S] iron-sulfur cluster. It cycles between 2 conformational states during catalysis to transfer electrons from the quinol bound in the Q(0) site in cytochrome b to cytochrome c1. The protein is Cytochrome b-c1 complex subunit Rieske, mitochondrial (fes-1) of Neurospora crassa (strain ATCC 24698 / 74-OR23-1A / CBS 708.71 / DSM 1257 / FGSC 987).